A 122-amino-acid polypeptide reads, in one-letter code: Large ribosomal subunit protein uL22 (122 aa).

The segment at 102-122 is disordered; the sequence is VAEGKEMKSSKSHKKNQAEGK.

Belongs to the universal ribosomal protein uL22 family. In terms of assembly, part of the 50S ribosomal subunit.

This protein binds specifically to 23S rRNA; its binding is stimulated by other ribosomal proteins, e.g. L4, L17, and L20. It is important during the early stages of 50S assembly. It makes multiple contacts with different domains of the 23S rRNA in the assembled 50S subunit and ribosome. Its function is as follows. The globular domain of the protein is located near the polypeptide exit tunnel on the outside of the subunit, while an extended beta-hairpin is found that lines the wall of the exit tunnel in the center of the 70S ribosome. The sequence is that of Large ribosomal subunit protein uL22 from Helicobacter pylori (strain HPAG1).